A 126-amino-acid polypeptide reads, in one-letter code: Holo-[acyl-carrier-protein] synthase (126 aa).

Mg(2+)-binding residues include aspartate 9 and glutamate 57.

It belongs to the P-Pant transferase superfamily. AcpS family. Mg(2+) is required as a cofactor.

The protein localises to the cytoplasm. The catalysed reaction is apo-[ACP] + CoA = holo-[ACP] + adenosine 3',5'-bisphosphate + H(+). Its function is as follows. Transfers the 4'-phosphopantetheine moiety from coenzyme A to a Ser of acyl-carrier-protein. The chain is Holo-[acyl-carrier-protein] synthase from Pseudoalteromonas atlantica (strain T6c / ATCC BAA-1087).